The chain runs to 317 residues: Acetyl-coenzyme A carboxylase carboxyl transferase subunit alpha (317 aa).

The CoA carboxyltransferase C-terminal domain occupies 37-292 (QISQKLEDTK…EEYILKAFNE (256 aa)).

Belongs to the AccA family. In terms of assembly, acetyl-CoA carboxylase is a heterohexamer composed of biotin carboxyl carrier protein (AccB), biotin carboxylase (AccC) and two subunits each of ACCase subunit alpha (AccA) and ACCase subunit beta (AccD).

The protein resides in the cytoplasm. The catalysed reaction is N(6)-carboxybiotinyl-L-lysyl-[protein] + acetyl-CoA = N(6)-biotinyl-L-lysyl-[protein] + malonyl-CoA. It functions in the pathway lipid metabolism; malonyl-CoA biosynthesis; malonyl-CoA from acetyl-CoA: step 1/1. In terms of biological role, component of the acetyl coenzyme A carboxylase (ACC) complex. First, biotin carboxylase catalyzes the carboxylation of biotin on its carrier protein (BCCP) and then the CO(2) group is transferred by the carboxyltransferase to acetyl-CoA to form malonyl-CoA. This chain is Acetyl-coenzyme A carboxylase carboxyl transferase subunit alpha, found in Flavobacterium psychrophilum (strain ATCC 49511 / DSM 21280 / CIP 103535 / JIP02/86).